The chain runs to 500 residues: ERAD-associated E3 ubiquitin-protein ligase HRD1 (500 aa).

The Cytoplasmic segment spans residues 1–3 (MIR). Residues 4 to 24 (LQTYAAFSLMATATAVYYAFS) traverse the membrane as a helical segment. Topologically, residues 25-40 (SREQFYPAMVYLSTSK) are lumenal. Residues 41–61 (ICFVLLLNTGLVAMCVAWQLV) form a helical membrane-spanning segment. The Cytoplasmic portion of the chain corresponds to 62–98 (KRLFLGTLREAEVERLNEQAWREVVEILFAVTIFRQD). Residues 99–119 (FSVSFLAMVAALLLVKALHWL) form a helical membrane-spanning segment. The Lumenal segment spans residues 120 to 135 (AQKRVEYIETTPSVPM). The chain crosses the membrane as a helical span at residues 136–156 (LSHARIVSFMLFLLVVDCLFL). At 157 to 170 (SNSLRSLIHKREAS) the chain is on the cytoplasmic side. The chain crosses the membrane as a helical span at residues 171 to 191 (VAIFFSFEYMILATSTVSTFV). Topologically, residues 192 to 225 (KYIFYVSDMLMEGQWEKKAVYTFYLELISDLVHL) are lumenal. A helical membrane pass occupies residues 226–246 (SLYMLFFIAIFLNYGVPLHLI). The Cytoplasmic portion of the chain corresponds to 247 to 500 (RELYETFRNF…NENGEHTKSD (254 aa)). The segment at 292–330 (CIICREEMTTAKKLLCGHLFHVHCLRSWLERQHTCPTCR) adopts an RING-type; atypical zinc-finger fold. Disordered stretches follow at residues 337–375 (DNGR…SRRQ) and 398–438 (NNLN…SAPT). Positions 348–358 (VHPGVQPVPGN) are enriched in low complexity. Positions 398-426 (NNLNRYSTPPQSTSNGPQSGEASTSNQSP) are enriched in polar residues.

Belongs to the HRD1 family.

It is found in the endoplasmic reticulum membrane. It carries out the reaction S-ubiquitinyl-[E2 ubiquitin-conjugating enzyme]-L-cysteine + [acceptor protein]-L-lysine = [E2 ubiquitin-conjugating enzyme]-L-cysteine + N(6)-ubiquitinyl-[acceptor protein]-L-lysine.. It functions in the pathway protein modification; protein ubiquitination. Functionally, probable component of the HRD1 ubiquitin ligase complex that mediates the rapid degradation of misfolded endoplasmic reticulum (ER) proteins, a process called ER-associated degradation (ERAD). The protein is ERAD-associated E3 ubiquitin-protein ligase HRD1 of Oryza sativa subsp. japonica (Rice).